The chain runs to 962 residues: Leucine-rich repeat-containing G-protein coupled receptor 6 (962 aa).

The signal sequence occupies residues methionine 1–serine 16. In terms of domain architecture, LRRNT spans proline 20–proline 60. LRR repeat units follow at residues aspartate 38–leucine 58, serine 59–asparagine 82, leucine 83–glycine 106, leucine 107–leucine 131, asparagine 133–glycine 154, methionine 155–aspartate 178, leucine 179–asparagine 202, leucine 203–glycine 226, histidine 228–leucine 250, alanine 251–glycine 273, proline 275–phenylalanine 297, leucine 298–threonine 321, threonine 322–leucine 344, leucine 345–threonine 368, leucine 370–glutamine 390, leucine 391–serine 414, and glutamine 416–serine 438. Residue asparagine 71 is glycosylated (N-linked (GlcNAc...) asparagine). An N-linked (GlcNAc...) asparagine glycan is attached at asparagine 202. 7 helical membrane passes run glycine 559 to phenylalanine 579, phenylalanine 590 to alanine 610, serine 647 to glycine 669, alanine 679 to valine 699, phenylalanine 723 to isoleucine 743, valine 766 to serine 786, and serine 801 to phenylalanine 821. Cysteine 633 and cysteine 708 are disulfide-bonded.

The protein belongs to the G-protein coupled receptor 1 family.

The protein resides in the cell membrane. In terms of biological role, receptor for R-spondins that potentiates the canonical Wnt signaling pathway. Upon binding to R-spondins (rspo1, rspo2, rspo3 or rspo4), associates with phosphorylated lrp6 and frizzled receptors that are activated by extracellular Wnt receptors, triggering the canonical Wnt signaling pathway to increase expression of target genes. In contrast to classical G-protein coupled receptors, does not activate heterotrimeric G-proteins to transduce the signal. The sequence is that of Leucine-rich repeat-containing G-protein coupled receptor 6 (lgr6) from Danio rerio (Zebrafish).